We begin with the raw amino-acid sequence, 185 residues long: Ribosome-recycling factor (185 aa).

Residues 142–161 (LVKDGEAGEDEGARAEKELD) form a disordered region.

This sequence belongs to the RRF family.

It localises to the cytoplasm. In terms of biological role, responsible for the release of ribosomes from messenger RNA at the termination of protein biosynthesis. May increase the efficiency of translation by recycling ribosomes from one round of translation to another. The polypeptide is Ribosome-recycling factor (Paenarthrobacter aurescens (strain TC1)).